A 609-amino-acid polypeptide reads, in one-letter code: DNA polymerase alpha subunit B (609 aa).

A Phosphoserine modification is found at S155. T164 is subject to Phosphothreonine. A phosphoserine mark is found at S166 and S168.

Belongs to the DNA polymerase alpha subunit B family. Component of the alpha DNA polymerase complex (also known as the alpha DNA polymerase-primase complex) consisting of four subunits: the catalytic subunit PolA1, the regulatory subunit PolA2, and the primase complex subunits Prim1 and Prim2 respectively. PolA1 associates with the DNA primase complex before association with PolA2. In terms of processing, phosphorylated in embryos until cycle 13. Expressed in embryos (at protein level).

The protein resides in the nucleus. Accessory subunit of the DNA polymerase alpha complex (also known as the alpha DNA polymerase-primase complex) which plays an essential role in the initiation of DNA synthesis. During the S phase of the cell cycle, the DNA polymerase alpha complex (composed of a catalytic subunit PolA1, an accessory subunit PolA2 and two primase subunits, the catalytic subunit Prim1 and the regulatory subunit Prim2) is recruited to DNA at the replicative forks. The primase subunit of the polymerase alpha complex initiates DNA synthesis by oligomerising short RNA primers on both leading and lagging strands. These primers are initially extended by the polymerase alpha catalytic subunit and subsequently transferred to polymerase delta and polymerase epsilon for processive synthesis on the lagging and leading strand, respectively. The chain is DNA polymerase alpha subunit B from Drosophila melanogaster (Fruit fly).